The chain runs to 675 residues: Potassium-transporting ATPase ATP-binding subunit (675 aa).

4 consecutive transmembrane segments (helical) span residues 34-54 (IMFV…FPDI), 65-85 (LITI…SEAF), 216-236 (IALF…IVTL), and 245-265 (LILP…TTIG). Catalysis depends on aspartate 304, which acts as the 4-aspartylphosphate intermediate. Residues aspartate 341, glutamate 345, 372–379 (FTAETRMS), and lysine 390 contribute to the ATP site. 2 residues coordinate Mg(2+): aspartate 513 and aspartate 517. Transmembrane regions (helical) follow at residues 569-591 (ALTT…ALMM), 611-631 (AIIS…PIAM), and 644-664 (IFIN…FLGI).

Belongs to the cation transport ATPase (P-type) (TC 3.A.3) family. Type IA subfamily. In terms of assembly, the system is composed of three essential subunits: KdpA, KdpB and KdpC.

It is found in the cell membrane. It carries out the reaction K(+)(out) + ATP + H2O = K(+)(in) + ADP + phosphate + H(+). In terms of biological role, part of the high-affinity ATP-driven potassium transport (or Kdp) system, which catalyzes the hydrolysis of ATP coupled with the electrogenic transport of potassium into the cytoplasm. This subunit is responsible for energy coupling to the transport system and for the release of the potassium ions to the cytoplasm. This Staphylococcus aureus (strain Newman) protein is Potassium-transporting ATPase ATP-binding subunit.